Consider the following 167-residue polypeptide: UPF0587 protein F46B6.12 (167 aa).

4 residues coordinate Zn(2+): cysteine 34, cysteine 37, cysteine 68, and cysteine 71.

Belongs to the UPF0587 family.

In Caenorhabditis elegans, this protein is UPF0587 protein F46B6.12.